The primary structure comprises 365 residues: Probable L-tyrosine/L-aspartate decarboxylase (365 aa).

Residue Lys-225 is modified to N6-(pyridoxal phosphate)lysine.

This sequence belongs to the group II decarboxylase family. MfnA subfamily. Requires pyridoxal 5'-phosphate as cofactor.

The enzyme catalyses L-tyrosine + H(+) = tyramine + CO2. The catalysed reaction is L-aspartate + H(+) = beta-alanine + CO2. It participates in cofactor biosynthesis; methanofuran biosynthesis. It functions in the pathway cofactor biosynthesis; coenzyme A biosynthesis. Functionally, catalyzes the decarboxylation of L-tyrosine to produce tyramine for methanofuran biosynthesis. Can also catalyze the decarboxylation of L-aspartate to produce beta-alanine for coenzyme A (CoA) biosynthesis. In Methanocorpusculum labreanum (strain ATCC 43576 / DSM 4855 / Z), this protein is Probable L-tyrosine/L-aspartate decarboxylase.